A 254-amino-acid polypeptide reads, in one-letter code: MEYASDASLDPEAPWPPAPRARACRVLPWALVAGLLLLLLLAAACAVFLACPWAVSGARASPGSAASPRLREGPELSPDDPAGLLDLRQGMFAQLVAQNVLLIDGPLSWYSDPGLAGVSLTGGLSYKEDTKELVVAKAGVYYVFFQLELRRVVAGEGSGSVSLALHLQPLRSAAGAAALALTVDLPPASSEARNSAFGFQGRLLHLSAGQRLGVHLHTEARARHAWQLTQGATVLGLFRVTPEIPAGLPSPRSE.

Topologically, residues 1-28 (MEYASDASLDPEAPWPPAPRARACRVLP) are cytoplasmic. Residues 29–49 (WALVAGLLLLLLLAAACAVFL) form a helical; Signal-anchor for type II membrane protein membrane-spanning segment. Topologically, residues 50–254 (ACPWAVSGAR…PAGLPSPRSE (205 aa)) are extracellular. Positions 91 to 240 (MFAQLVAQNV…GATVLGLFRV (150 aa)) constitute a THD domain.

The protein belongs to the tumor necrosis factor family. As to quaternary structure, homotrimer. As to expression, expressed in brain, placenta, lung, skeletal muscle and kidney.

Its subcellular location is the membrane. Its function is as follows. Cytokine that binds to TNFRSF9. Induces the proliferation of activated peripheral blood T-cells. May have a role in activation-induced cell death (AICD). May play a role in cognate interactions between T-cells and B-cells/macrophages. The sequence is that of Tumor necrosis factor ligand superfamily member 9 (TNFSF9) from Homo sapiens (Human).